The primary structure comprises 372 residues: uncharacterized protein (372 aa).

The PNPLA domain occupies 38–270 (FFIEGGGTKG…ANNIPLDYLI (233 aa)). A GXGXXG motif is present at residues 42-47 (GGGTKG). The GXSXG signature appears at 74–78 (GTSVG). Ser76 (nucleophile) is an active-site residue. Residue Asp257 is the Proton acceptor of the active site. The short motif at 257 to 259 (DGG) is the DGA/G element.

Its function is as follows. Probable lipid hydrolase. This is an uncharacterized protein from Acanthamoeba polyphaga (Amoeba).